The chain runs to 101 residues: MAKKSKIVKNNKRRDIVARYAQRRAELKQIIQSPTSSYEQRLDAQRALSRQPRDASAVRLRNRDAIDGRPRGHLRKFGLSRVRVRELAHAGQLPGVRKASW.

Positions 35–56 (TSSYEQRLDAQRALSRQPRDAS) are disordered.

The protein belongs to the universal ribosomal protein uS14 family. As to quaternary structure, part of the 30S ribosomal subunit. Contacts proteins S3 and S10.

Binds 16S rRNA, required for the assembly of 30S particles and may also be responsible for determining the conformation of the 16S rRNA at the A site. This chain is Small ribosomal subunit protein uS14A, found in Mycobacterium marinum (strain ATCC BAA-535 / M).